A 780-amino-acid polypeptide reads, in one-letter code: TSC22 domain family protein 2 (780 aa).

5 disordered regions span residues Ala20 to Pro86, Thr126 to Cys158, Ala235 to Pro499, Leu587 to Ser607, and Leu736 to Ala780. A compositionally biased stretch (acidic residues) spans Glu28 to Asp37. The span at Thr126–Pro146 shows a compositional bias: low complexity. Positions Gly241 to Thr262 are enriched in polar residues. Composition is skewed to low complexity over residues Gly297–Gly316, Pro344–Gln361, and Gln395–Pro412. Polar residues predominate over residues Thr415–Ser434. Low complexity predominate over residues Gln453–Pro468. Polar residues predominate over residues Leu736–Ser756. The segment covering Pro765–Gln774 has biased composition (pro residues).

Belongs to the TSC-22/Dip/Bun family. In terms of assembly, interacts with NRBP1. Interacts with PKM isoform M2; the interaction results in reduced nuclear levels of PKM isoform M2, leading to repression of cyclin CCND1 transcription and reduced cell growth. Interacts with WDR77.

In terms of biological role, reduces the level of nuclear PKM isoform M2 which results in repression of cyclin CCND1 transcription and reduced cell growth. The polypeptide is TSC22 domain family protein 2 (Homo sapiens (Human)).